We begin with the raw amino-acid sequence, 102 residues long: Large ribosomal subunit protein bL21 (102 aa).

The protein belongs to the bacterial ribosomal protein bL21 family. Part of the 50S ribosomal subunit. Contacts protein L20.

Its function is as follows. This protein binds to 23S rRNA in the presence of protein L20. In Campylobacter hominis (strain ATCC BAA-381 / DSM 21671 / CCUG 45161 / LMG 19568 / NCTC 13146 / CH001A), this protein is Large ribosomal subunit protein bL21.